The sequence spans 191 residues: MTSRGDSREKILHTASRLFQLQGYHATGLNQIVKESGAPKGSLYHFFPNGKEELAIEAVTYTGKIVEHLIQQSMDESSDPVEAIQLFIKKTASQFDNTESIKGIPVGLLASETALISEPLRTVCMKVFKSWEAVFARKLMENGFAEEEANQLGTLINSMIEGGIMLSLTNKDKTPLLLIAEQIPVLVRKKG.

The HTH tetR-type domain maps to Gly5 to Ile65. The segment at residues Gly28–Phe47 is a DNA-binding region (H-T-H motif).

This is an uncharacterized protein from Bacillus subtilis (strain 168).